A 150-amino-acid polypeptide reads, in one-letter code: 3-dehydroquinate dehydratase (150 aa).

Residue Tyr-22 is the Proton acceptor of the active site. Residues Asn-73, His-79, and Asp-86 each contribute to the substrate site. His-99 functions as the Proton donor in the catalytic mechanism. Residues 100-101 (LT) and Arg-110 each bind substrate.

Belongs to the type-II 3-dehydroquinase family. In terms of assembly, homododecamer.

It carries out the reaction 3-dehydroquinate = 3-dehydroshikimate + H2O. Its pathway is metabolic intermediate biosynthesis; chorismate biosynthesis; chorismate from D-erythrose 4-phosphate and phosphoenolpyruvate: step 3/7. Its function is as follows. Catalyzes a trans-dehydration via an enolate intermediate. This Desulforudis audaxviator (strain MP104C) protein is 3-dehydroquinate dehydratase.